A 51-amino-acid polypeptide reads, in one-letter code: Defensin (51 aa).

3 cysteine pairs are disulfide-bonded: Cys3–Cys31, Cys17–Cys36, and Cys21–Cys38. Phe51 is subject to Phenylalanine amide.

The protein resides in the secreted. Functionally, antibacterial peptide against Gram-positive and Gram-negative bacteria and fungi. In Bombus pascuorum (Common carder bumblebee), this protein is Defensin.